The following is a 382-amino-acid chain: Alcohol dehydrogenase 4 (382 aa).

NAD(+) contacts are provided by Asp40, Asn72, Gly99, Ser100, Thr139, Thr140, Thr148, Phe150, Lys161, and Gly183. Residues Asp195, His199, and His264 each contribute to the Fe(2+) site. NAD(+) is bound by residues His268 and His278. His278 is a Fe(2+) binding site.

Belongs to the iron-containing alcohol dehydrogenase family. In terms of assembly, homodimer. The cofactor is Zn(2+). Requires Fe(2+) as cofactor.

The protein localises to the mitochondrion. It catalyses the reaction a primary alcohol + NAD(+) = an aldehyde + NADH + H(+). It carries out the reaction ethanol + NAD(+) = acetaldehyde + NADH + H(+). Its activity is regulated as follows. Inhibited by EDTA. Functionally, alcohol dehydrogenase specific for ethanol. Acts mainyl as a mitochondrial formaldehyde dehydrogenase and has no effect on ethanol production. Shows drastically reduced activity towards primary alcohols from 4 carbon atoms upward. Isomers of aliphatic alcohol, as well as secondary alcohols and glycerol are not used at all. The role of ADH4 in yeast metabolism is not yet known, but ADH4 is not responsible for the production of ethanol during growth on glucose nor responsible for the oxidation of ethanol to acetaldehyde. The chain is Alcohol dehydrogenase 4 from Saccharomyces cerevisiae (strain ATCC 204508 / S288c) (Baker's yeast).